Here is a 53-residue protein sequence, read N- to C-terminus: UPF0391 membrane protein Patl_1732 (53 aa).

A run of 2 helical transmembrane segments spans residues 4-24 and 28-48; these read WAVI…GGIA and AGIA…SVVM.

Belongs to the UPF0391 family.

It localises to the cell membrane. This is UPF0391 membrane protein Patl_1732 from Pseudoalteromonas atlantica (strain T6c / ATCC BAA-1087).